Here is a 573-residue protein sequence, read N- to C-terminus: Dihydroxy-acid dehydratase (573 aa).

Position 62 (cysteine 62) interacts with [2Fe-2S] cluster. Aspartate 94 lines the Mg(2+) pocket. Cysteine 135 contacts [2Fe-2S] cluster. Mg(2+) is bound by residues aspartate 136 and lysine 137. At lysine 137 the chain carries N6-carboxylysine. A [2Fe-2S] cluster-binding site is contributed by cysteine 212. A Mg(2+)-binding site is contributed by glutamate 463. The active-site Proton acceptor is serine 489.

Belongs to the IlvD/Edd family. As to quaternary structure, homodimer. It depends on [2Fe-2S] cluster as a cofactor. The cofactor is Mg(2+).

The enzyme catalyses (2R)-2,3-dihydroxy-3-methylbutanoate = 3-methyl-2-oxobutanoate + H2O. It carries out the reaction (2R,3R)-2,3-dihydroxy-3-methylpentanoate = (S)-3-methyl-2-oxopentanoate + H2O. It participates in amino-acid biosynthesis; L-isoleucine biosynthesis; L-isoleucine from 2-oxobutanoate: step 3/4. Its pathway is amino-acid biosynthesis; L-valine biosynthesis; L-valine from pyruvate: step 3/4. In terms of biological role, functions in the biosynthesis of branched-chain amino acids. Catalyzes the dehydration of (2R,3R)-2,3-dihydroxy-3-methylpentanoate (2,3-dihydroxy-3-methylvalerate) into 2-oxo-3-methylpentanoate (2-oxo-3-methylvalerate) and of (2R)-2,3-dihydroxy-3-methylbutanoate (2,3-dihydroxyisovalerate) into 2-oxo-3-methylbutanoate (2-oxoisovalerate), the penultimate precursor to L-isoleucine and L-valine, respectively. This is Dihydroxy-acid dehydratase from Renibacterium salmoninarum (strain ATCC 33209 / DSM 20767 / JCM 11484 / NBRC 15589 / NCIMB 2235).